Consider the following 63-residue polypeptide: Conotoxin Pu5.4 (63 aa).

The first 22 residues, 1–22 (MRCVPVFVILLLLIASTPSVDA), serve as a signal peptide directing secretion. A propeptide spanning residues 23–50 (TQKTKDDMSLASFHDNAKRFLQTLRNTR) is cleaved from the precursor. The residue at position 62 (Trp62) is a Tryptophan amide.

This sequence belongs to the conotoxin T superfamily. Contains 2 disulfide bonds that can be either 'C1-C3, C2-C4' or 'C1-C4, C2-C3', since these disulfide connectivities have been observed for conotoxins with cysteine framework V (for examples, see AC P0DQQ7 and AC P81755). In terms of tissue distribution, expressed by the venom duct.

It is found in the secreted. The protein is Conotoxin Pu5.4 of Conus pulicarius (Flea-bitten cone).